The chain runs to 1379 residues: Attractin-like protein 1 (1379 aa).

The tract at residues 1–23 (METGGRARTGTPQPAAPGVWRAR) is disordered. An N-terminal signal peptide occupies residues 1–52 (METGGRARTGTPQPAAPGVWRARPAGGGGGGASSWLLDGNSWLLCYGFLYLA). One can recognise an EGF-like 1 domain in the interval 53–91 (LYAQVSQSKPCERTGSCFSGRCVNSTCLCDPGWVGDQCQ). Residues 53–1230 (LYAQVSQSKP…FSQHNTIMDL (1178 aa)) are Extracellular-facing. Cystine bridges form between cysteine 63–cysteine 79, cysteine 81–cysteine 90, and cysteine 93–cysteine 119. Asparagine 76 is a glycosylation site (N-linked (GlcNAc...) asparagine). In terms of domain architecture, CUB spans 93–209 (CQGRFKLTEP…TGFNIFYSIN (117 aa)). Residues asparagine 174 and asparagine 198 are each glycosylated (N-linked (GlcNAc...) asparagine). Positions 207–245 (SINSCPNNCSGHGKCTTSVSVPSQVYCECDKYWKGEACD) constitute an EGF-like 2 domain. Disulfide bonds link cysteine 211–cysteine 221, cysteine 215–cysteine 233, and cysteine 235–cysteine 244. Kelch repeat units lie at residues 316–365 (FMWV…LYQE), 367–415 (IFMY…EGHS), 427–475 (VMII…SVYD), 480–531 (SIYV…LING), 533–591 (MLIF…VING), and 592–638 (SMYI…WNKN). Asparagine 380 carries an N-linked (GlcNAc...) asparagine glycan. PSI domains are found at residues 614–657 (NCKA…AKCP), 666–709 (RCYR…TKCH), and 715–760 (ICNK…DACL). The region spanning 755-873 (IGDACLRVNS…TSMANGLVCE (119 aa)) is the C-type lectin domain. N-linked (GlcNAc...) asparagine glycosylation is found at asparagine 763, asparagine 778, and asparagine 898. Cysteine 776 and cysteine 872 are joined by a disulfide. PSI domains are found at residues 889 to 939 (PCSL…ATCS) and 942 to 1012 (NCSG…IQCP). Cystine bridges form between cysteine 1014-cysteine 1022, cysteine 1016-cysteine 1028, cysteine 1031-cysteine 1040, cysteine 1043-cysteine 1057, cysteine 1060-cysteine 1069, cysteine 1062-cysteine 1076, cysteine 1078-cysteine 1088, and cysteine 1091-cysteine 1106. Laminin EGF-like domains lie at 1014–1059 (CQCN…QCTA) and 1060–1108 (CTCS…TCYY). Asparagine 1157 carries an N-linked (GlcNAc...) asparagine glycan. Residues 1231–1251 (VQFFVTFFSCFLSLLLVAAVV) traverse the membrane as a helical segment. The Cytoplasmic portion of the chain corresponds to 1252 to 1379 (WKIKQTCWAS…HLSTRQGTCV (128 aa)). The disordered stretch occupies residues 1354–1379 (KASDSKDKTSGVRNRKHLSTRQGTCV).

Interacts with MC4R.

The protein localises to the membrane. May play a role in melanocortin signaling pathways that regulate energy homeostasis. This Homo sapiens (Human) protein is Attractin-like protein 1 (ATRNL1).